The sequence spans 237 residues: Uracil-DNA glycosylase (237 aa).

Catalysis depends on aspartate 77, which acts as the Proton acceptor.

Belongs to the uracil-DNA glycosylase (UDG) superfamily. UNG family.

It is found in the cytoplasm. It carries out the reaction Hydrolyzes single-stranded DNA or mismatched double-stranded DNA and polynucleotides, releasing free uracil.. Functionally, excises uracil residues from the DNA which can arise as a result of misincorporation of dUMP residues by DNA polymerase or due to deamination of cytosine. In Acinetobacter baylyi (strain ATCC 33305 / BD413 / ADP1), this protein is Uracil-DNA glycosylase.